The chain runs to 257 residues: Ribosome-associated protein quality control protein P2 (257 aa).

The segment at 1–74 is N-terminal domain; the sequence is MSDIYQHFRK…RAERKRAILF (74 aa). The central region stretch occupies residues 87-166; sequence LQAFNVRYAD…EKIDLSDLNI (80 aa). The region spanning 181-251 is the S4 RNA-binding domain; that stretch reads LRLDAVCASM…GKTKKDKWRV (71 aa).

In the presence of chloramphenicol (a translation elongation inhibitor), but not erythromycin or lincomycin, associates with 50S ribosomal subunits with or without a tRNA in the P-site. The S4 domain binds in a similar position to RqcP.

It localises to the cytoplasm. Functionally, part of the ribosome quality control system (RQC), a ribosome-associated complex that mediates the extraction of incompletely synthesized nascent chains from stalled ribosomes and their subsequent degradation. RqcH recruits Ala-charged tRNA, and with RqcP directs the elongation of stalled nascent chains on 50S ribosomal subunits, leading to non-templated C-terminal alanine extensions (Ala tail). The Ala tail promotes nascent chain degradation. RqcP2 (YlmH) overexpression can compensate for RqcP's role in Ala tailing during RQC, restoring Ala tail addition to peptides in stalled ribosomes. Overexpression complements a double ssrA-rqcP double deletion, but not an ssrA-rqcH double deletion. The majority of tagged protein is associated with tRNA-less 50S subunits, suggesting it might also play a role in late stage 50S subunit biogenesis. The polypeptide is Ribosome-associated protein quality control protein P2 (Bacillus subtilis (strain 168)).